We begin with the raw amino-acid sequence, 140 residues long: Large ribosomal subunit protein uL15 (140 aa).

The interval 1 to 32 (MDTKKFRGSRTCGGGTHKNRRGAGNRGGRGKA) is disordered.

It belongs to the universal ribosomal protein uL15 family. Part of the 50S ribosomal subunit.

Its function is as follows. Binds to the 23S rRNA. This is Large ribosomal subunit protein uL15 from Methanosarcina acetivorans (strain ATCC 35395 / DSM 2834 / JCM 12185 / C2A).